The chain runs to 295 residues: Tissue factor (295 aa).

Residues 1-32 (METPAWPRVPRPETAVARTLLLGWVFAQVAGA) form the signal peptide. Over 33-251 (SGTTNTVAAY…MGQEKGEFRE (219 aa)) the chain is Extracellular. Short sequence motifs (WKS motif) lie at residues 46-48 (WKS) and 77-79 (WKS). C81 and C89 are oxidised to a cystine. Residues N156 and N169 are each glycosylated (N-linked (GlcNAc...) asparagine). The WKS motif motif lies at 190-192 (WKS). A disulfide bridge connects residues C218 and C241. A helical membrane pass occupies residues 252–274 (IFYIIGAVVFVVIILVIILAISL). Topologically, residues 275-295 (HKCRKAGVGQSWKENSPLNVS) are cytoplasmic. A lipid anchor (S-palmitoyl cysteine) is attached at C277.

It belongs to the tissue factor family. In terms of assembly, interacts with HSPE; the interaction, inhibited by heparin, promotes the generation of activated factor X and activates coagulation in the presence of activated factor VII. Lung, placenta and pancreas.

The protein resides in the membrane. It is found in the secreted. In terms of biological role, initiates blood coagulation by forming a complex with circulating factor VII or VIIa. The [TF:VIIa] complex activates factors IX or X by specific limited proteolysis. TF plays a role in normal hemostasis by initiating the cell-surface assembly and propagation of the coagulation protease cascade. The sequence is that of Tissue factor (F3) from Homo sapiens (Human).